The sequence spans 238 residues: Flagellar L-ring protein (238 aa).

The N-terminal stretch at 1-16 (MNKAILAVAMVLLLAG) is a signal peptide. Cys17 carries N-palmitoyl cysteine lipidation. Cys17 is lipidated: S-diacylglycerol cysteine.

The protein belongs to the FlgH family. As to quaternary structure, the basal body constitutes a major portion of the flagellar organelle and consists of four rings (L,P,S, and M) mounted on a central rod.

Its subcellular location is the cell outer membrane. The protein localises to the bacterial flagellum basal body. Functionally, assembles around the rod to form the L-ring and probably protects the motor/basal body from shearing forces during rotation. The protein is Flagellar L-ring protein of Brucella melitensis biotype 2 (strain ATCC 23457).